Consider the following 382-residue polypeptide: Neuropeptide Y receptor type 2 (382 aa).

A disordered region spans residues 1-39 (MGPIGAEADENQTVEEMKMEPSGPGHTTPRGELAPDSEP). Over 1–46 (MGPIGAEADENQTVEEMKMEPSGPGHTTPRGELAPDSEPELKDSTK) the chain is Extracellular. Asparagine 11 carries an N-linked (GlcNAc...) asparagine glycan. The chain crosses the membrane as a helical span at residues 47–67 (LIEVQIILILAYCSIILLGVV). The Cytoplasmic segment spans residues 68–87 (GNSLVIHVVIKFKSMRTVTN). Residues 88–108 (FFIANLAVADLLVNTLCLPFT) traverse the membrane as a helical segment. Residues 109 to 125 (LTYTLMGEWKMGPVLCH) are Extracellular-facing. Cysteine 124 and cysteine 204 are joined by a disulfide. Residues 126–146 (LVPYAQGLAVQVSTITLTVIA) traverse the membrane as a helical segment. Over 147–166 (LDRHRCIVYHLESKISKRIS) the chain is Cytoplasmic. Residues 167–187 (FLIIGLAWGISALLASPLAIF) form a helical membrane-spanning segment. Residues 188–217 (REYSLIEIIPDFEIVACTEKWPGEEKSIYG) lie on the Extracellular side of the membrane. The chain crosses the membrane as a helical span at residues 218–238 (TVYSLSSLLILYVLPLGIISF). Residues 239 to 269 (SYARIWSKLKNHVSPGGVNDHYHQRRQKTTK) lie on the Cytoplasmic side of the membrane. The helical transmembrane segment at 270–290 (MLVCVVVVFAVSWLPLHAFQL) threads the bilayer. The Extracellular portion of the chain corresponds to 291-305 (AVDIDSQVLDLKEYK). A helical transmembrane segment spans residues 306–326 (LIFTVFHIIAMCSTFANPLLY). The Cytoplasmic portion of the chain corresponds to 327-382 (GWMNSNYRKAFLSAFRCEQRLDAIHSEVSMTSKAKKNLEATKNGGPDDSFTEATNV). Cysteine 343 carries the S-palmitoyl cysteine lipid modification. The tract at residues 363 to 382 (NLEATKNGGPDDSFTEATNV) is disordered.

This sequence belongs to the G-protein coupled receptor 1 family.

Its subcellular location is the cell membrane. Functionally, receptor for neuropeptide Y and peptide YY. The polypeptide is Neuropeptide Y receptor type 2 (NPY2R) (Sus scrofa (Pig)).